The sequence spans 344 residues: KRR1 small subunit processome component homolog (344 aa).

The region spanning 126–194 (DIIKIGNLVH…VRDIVLDTMN (69 aa)) is the KH domain. Residues 230–246 (KNKNISKRKQPKNKKPK) are compositionally biased toward basic residues. A disordered region spans residues 230 to 326 (KNKNISKRKQ…KRAAEDNKVD (97 aa)). A coiled-coil region spans residues 271 to 344 (FLNKEQKQAK…MKANKKKERS (74 aa)). Basic and acidic residues predominate over residues 272–303 (LNKEQKQAKRQQERTAKQAEAAKKQDERRNKD).

Belongs to the KRR1 family. As to quaternary structure, monomer. Component of the ribosomal small subunit (SSU) processome.

Its subcellular location is the nucleus. It localises to the nucleolus. Its function is as follows. Required for 40S ribosome biogenesis. Involved in nucleolar processing of pre-18S ribosomal RNA and ribosome assembly. Binds to RNA. Required for female germline development, cell viability during eye development and for survival of dividing cells and epithelial cells during early wing disk development. This Drosophila mojavensis (Fruit fly) protein is KRR1 small subunit processome component homolog.